Here is a 158-residue protein sequence, read N- to C-terminus: Ribosome maturation factor RimP (158 aa).

This sequence belongs to the RimP family.

It is found in the cytoplasm. In terms of biological role, required for maturation of 30S ribosomal subunits. The protein is Ribosome maturation factor RimP of Lactiplantibacillus plantarum (strain ATCC BAA-793 / NCIMB 8826 / WCFS1) (Lactobacillus plantarum).